A 393-amino-acid polypeptide reads, in one-letter code: Yellow-related salivary protein SP03B (393 aa).

Positions 1–18 are cleaved as a signal peptide; that stretch reads MKIFLCLIAVVFLQGVVG. Asn29 carries N-linked (GlcNAc...) asparagine glycosylation.

Belongs to the major royal jelly protein family. As to expression, female salivary gland (at protein level).

The protein resides in the secreted. Functionally, probably modulates blood feeding of sand flies on vertebrate species by binding and sequestering different mediators involved in the host response. Binds biogenic amines. Binds serotonin with high affinity. Poorly binds histamine. Does not bind dopamine, noradrenaline, adrenaline and octopamine. The chain is Yellow-related salivary protein SP03B from Phlebotomus perniciosus (Phlebotomine sand fly).